A 657-amino-acid chain; its full sequence is Methionine--tRNA ligase (657 aa).

The 'HIGH' region signature appears at 13-23 (YYPSGNLHIGH). Residues 308–312 (KMSKS) carry the 'KMSKS' region motif. Position 311 (Lys311) interacts with ATP. The 101-residue stretch at 557 to 657 (DFDKVEIKAA…SAIPNGAVIK (101 aa)) folds into the tRNA-binding domain.

Belongs to the class-I aminoacyl-tRNA synthetase family. MetG type 2B subfamily. As to quaternary structure, homodimer.

It localises to the cytoplasm. The catalysed reaction is tRNA(Met) + L-methionine + ATP = L-methionyl-tRNA(Met) + AMP + diphosphate. Functionally, is required not only for elongation of protein synthesis but also for the initiation of all mRNA translation through initiator tRNA(fMet) aminoacylation. This is Methionine--tRNA ligase from Staphylococcus aureus (strain MW2).